The primary structure comprises 1164 residues: DNA-directed RNA polymerase 132 kDa polypeptide (1164 aa).

This sequence belongs to the RNA polymerase beta chain family. As to quaternary structure, the DNA-dependent RNA polymerase used for intermediate and late genes expression consists of eight subunits (147) kDa, (133) kDa, (35) kDa, (30) kDa, (22) kDa, (19) kDa, (18) kDa and (7) kDa totalling more than 500 kDa in mass. The same holoenzyme, with the addition of the transcription-specificity factor RAP94, is used for early gene expression.

The protein localises to the virion. The catalysed reaction is RNA(n) + a ribonucleoside 5'-triphosphate = RNA(n+1) + diphosphate. Part of the DNA-dependent RNA polymerase which catalyzes the transcription of viral DNA into RNA using the four ribonucleoside triphosphates as substrates. Responsible for the transcription of early, intermediate and late genes. DNA-dependent RNA polymerase associates with the early transcription factor (ETF), itself composed of D6 and A7, thereby allowing the early genes transcription. Late transcription, and probably also intermediate transcription, require newly synthesized RNA polymerase. The polypeptide is DNA-directed RNA polymerase 132 kDa polypeptide (RPO132) (Camelus).